The chain runs to 645 residues: Dictomallein-like protein (645 aa).

The first 13 residues, 1-13 (MKLSMVMVLLVLA), serve as a signal peptide directing secretion. The tract at residues 19-55 (CGGNDDNNSERTHESGDSNGDVTTPDNDASSNDEDDA) is disordered. Residues 177-448 (PALHPELDLT…QRWVRNRARM (272 aa)) enclose the Peptidase M66 domain. Histidine 333 provides a ligand contact to Zn(2+). Residue glutamate 334 is part of the active site. The Zn(2+) site is built by histidine 337 and histidine 343.

Belongs to the dictomallein family. The cofactor is Zn(2+).

Its subcellular location is the secreted. The sequence is that of Dictomallein-like protein (dtmL) from Hahella chejuensis (strain KCTC 2396).